Reading from the N-terminus, the 50-residue chain is DNA replication protein repEA (50 aa).

Involved in T4 DNA replication. Binds to ssDNA. In Enterobacteria phage T4 (Bacteriophage T4), this protein is DNA replication protein repEA (repEA).